The following is a 169-amino-acid chain: MLVSLIPELPLENPFQDATDRFYVLPRLIGTVSNMVWPIKILRVAMETTQDLGACDATFYVRYTDSCQARTGEDADRVAIVRRIWDEQFDVFKIVGRTESYRSLGNGESTTSRETVVHCSKDIDSMEQSDMHDGFDGYVGLYSELTNLGSWLVVIHLNMLIRIVNPIAC.

The protein belongs to the UPF0725 (EMB2204) family.

The protein is UPF0725 protein At2g19200 of Arabidopsis thaliana (Mouse-ear cress).